A 598-amino-acid chain; its full sequence is Transcription factor himD (598 aa).

A DNA-binding region (zn(2)-C6 fungal-type) is located at residues 18–47 (CQNCARAKIRCIRSVPTGSCDRCERLRKTC). The segment at 87–110 (TVSEASIDDKSPTTTPTTPRPPPD) is disordered.

It localises to the nucleus. Transcription factor that, with himB, probably co-regulates the him gene cluster that mediates the biosynthesis of himeic acid A, a ubiquitin-activating enzyme (E1) inhibitor. In Aspergillus japonicus, this protein is Transcription factor himD.